Here is a 319-residue protein sequence, read N- to C-terminus: Pantothenate kinase (319 aa).

An ATP-binding site is contributed by 97–104; sequence GSVAVGKS.

The protein belongs to the prokaryotic pantothenate kinase family.

It localises to the cytoplasm. It catalyses the reaction (R)-pantothenate + ATP = (R)-4'-phosphopantothenate + ADP + H(+). It participates in cofactor biosynthesis; coenzyme A biosynthesis; CoA from (R)-pantothenate: step 1/5. This is Pantothenate kinase from Chelativorans sp. (strain BNC1).